The following is a 590-amino-acid chain: Arginine--tRNA ligase (590 aa).

The 'HIGH' region motif lies at 132–142; it reads PNTNKPLHLGH.

It belongs to the class-I aminoacyl-tRNA synthetase family. Monomer.

It localises to the cytoplasm. The enzyme catalyses tRNA(Arg) + L-arginine + ATP = L-arginyl-tRNA(Arg) + AMP + diphosphate. The sequence is that of Arginine--tRNA ligase from Treponema denticola (strain ATCC 35405 / DSM 14222 / CIP 103919 / JCM 8153 / KCTC 15104).